The sequence spans 624 residues: Chaperone protein HtpG (624 aa).

The segment at 1–336 (MKGQETRGFQ…SNDLPLNVSR (336 aa)) is a; substrate-binding. Positions 337–552 (EILQDSTVTR…ADEMSTQMAK (216 aa)) are b. Residues 553–624 (LFAAAGQSVP…IRRMNQLLVS (72 aa)) form a c region.

It belongs to the heat shock protein 90 family. In terms of assembly, homodimer.

Its subcellular location is the cytoplasm. Its function is as follows. Molecular chaperone. Has ATPase activity. The chain is Chaperone protein HtpG from Salmonella paratyphi A (strain ATCC 9150 / SARB42).